Reading from the N-terminus, the 358-residue chain is 4-hydroxy-3-methylbut-2-en-1-yl diphosphate synthase (flavodoxin) (358 aa).

Residues C270, C273, C305, and E312 each coordinate [4Fe-4S] cluster.

It belongs to the IspG family. Requires [4Fe-4S] cluster as cofactor.

It carries out the reaction (2E)-4-hydroxy-3-methylbut-2-enyl diphosphate + oxidized [flavodoxin] + H2O + 2 H(+) = 2-C-methyl-D-erythritol 2,4-cyclic diphosphate + reduced [flavodoxin]. It functions in the pathway isoprenoid biosynthesis; isopentenyl diphosphate biosynthesis via DXP pathway; isopentenyl diphosphate from 1-deoxy-D-xylulose 5-phosphate: step 5/6. Its function is as follows. Converts 2C-methyl-D-erythritol 2,4-cyclodiphosphate (ME-2,4cPP) into 1-hydroxy-2-methyl-2-(E)-butenyl 4-diphosphate. The protein is 4-hydroxy-3-methylbut-2-en-1-yl diphosphate synthase (flavodoxin) of Ruthia magnifica subsp. Calyptogena magnifica.